We begin with the raw amino-acid sequence, 114 residues long: Large ribosomal subunit protein bL19 (114 aa).

Belongs to the bacterial ribosomal protein bL19 family.

This protein is located at the 30S-50S ribosomal subunit interface and may play a role in the structure and function of the aminoacyl-tRNA binding site. The protein is Large ribosomal subunit protein bL19 of Thermoanaerobacter sp. (strain X514).